A 108-amino-acid polypeptide reads, in one-letter code: Ig light chain C region (108 aa).

The Ig-like domain maps to Pro-7–Gln-102. 2 disulfide bridges follow: Cys-13/Cys-106 and Cys-28/Cys-86.

The sequence is that of Ig light chain C region from Aquarana catesbeiana (American bullfrog).